Reading from the N-terminus, the 285-residue chain is HTH-type transcriptional regulator HexR (285 aa).

Residues 2 to 78 (KNLLEQIQSR…IQLAQSLASG (77 aa)) form the HTH rpiR-type domain. The H-T-H motif DNA-binding region spans 38-57 (IAALAQAAAVSEPTVNRFCR). Positions 122–261 (AVDLLIQARQ…ATGVTLRRGV (140 aa)) constitute an SIS domain.

Functionally, involved in regulation of glucose metabolism. Transcriptional repressor of the gap-1 gene and of the edd-glk-gltR-2 and zwf-pgl-eda operons. Acts by binding directly to an inverted pseudopalindromic sequence in the promoter region. The polypeptide is HTH-type transcriptional regulator HexR (Pseudomonas aeruginosa (strain ATCC 15692 / DSM 22644 / CIP 104116 / JCM 14847 / LMG 12228 / 1C / PRS 101 / PAO1)).